The primary structure comprises 546 residues: EH domain-containing protein 2 (546 aa).

2 EF-hand domains span residues 15 to 50 (EHQK…SKLS) and 51 to 84 (RQEL…VSLA). An EH domain is found at 16-94 (HQKIYKEWFN…QEGHEITSDL (79 aa)). Ca(2+)-binding residues include Asp28, Asp30, Asp32, Arg34, Asp39, Asp62, and Glu73. Residues 194 to 430 (FDAKPMVMLL…LLADLMDVPK (237 aa)) enclose the Dynamin-type G domain. The interval 204–211 (GQYSTGKT) is G1 motif. 204–211 (GQYSTGKT) contributes to the GTP binding site. The segment at 230–231 (EP) is G2 motif. A G3 motif region spans residues 292-295 (DTPG). GTP is bound by residues 292-296 (DTPGV) and Lys359. The tract at residues 358–361 (NKAD) is G4 motif. Position 382 (Val382) is a region of interest, G5 motif. 395 to 398 (SFND) contributes to the GTP binding site. The Nuclear localization signal motif lies at 429–436 (PKKACDRK). Residues 467 to 490 (KSKAQQRLMDNLEEEFGKVQREFH) adopt a coiled-coil conformation.

The protein belongs to the TRAFAC class dynamin-like GTPase superfamily. Dynamin/Fzo/YdjA family. EHD subfamily. Homooligomer, and heterooligomer with EHD1. Interacts with AP-4 complex subunit sigma (At2g19790).

It is found in the endosome membrane. The protein localises to the cell membrane. The protein resides in the nucleus. It localises to the cytoplasm. The enzyme catalyses GTP + H2O = GDP + phosphate + H(+). Functionally, involved in endocytosis negative regulation, probably by influencing actin organization. Acts in early endocytic membrane fusion and membrane trafficking of recycling endosomes. Exhibits an inhibitory effect on endocytosis when over-expressed. The chain is EH domain-containing protein 2 from Arabidopsis thaliana (Mouse-ear cress).